Here is a 150-residue protein sequence, read N- to C-terminus: UPF0260 protein PputGB1_4117 (150 aa).

It belongs to the UPF0260 family.

The chain is UPF0260 protein PputGB1_4117 from Pseudomonas putida (strain GB-1).